A 203-amino-acid polypeptide reads, in one-letter code: Outer-membrane lipoprotein carrier protein (203 aa).

The signal sequence occupies residues 1-21; sequence MKKIAITCALLSSLVASSVWA.

It belongs to the LolA family. Monomer.

The protein resides in the periplasm. Participates in the translocation of lipoproteins from the inner membrane to the outer membrane. Only forms a complex with a lipoprotein if the residue after the N-terminal Cys is not an aspartate (The Asp acts as a targeting signal to indicate that the lipoprotein should stay in the inner membrane). This is Outer-membrane lipoprotein carrier protein from Escherichia coli O139:H28 (strain E24377A / ETEC).